Consider the following 190-residue polypeptide: Large ribosomal subunit protein bL25 (190 aa).

This sequence belongs to the bacterial ribosomal protein bL25 family. CTC subfamily. As to quaternary structure, part of the 50S ribosomal subunit; part of the 5S rRNA/L5/L18/L25 subcomplex. Contacts the 5S rRNA. Binds to the 5S rRNA independently of L5 and L18.

Functionally, this is one of the proteins that binds to the 5S RNA in the ribosome where it forms part of the central protuberance. This Neisseria meningitidis serogroup A / serotype 4A (strain DSM 15465 / Z2491) protein is Large ribosomal subunit protein bL25.